Reading from the N-terminus, the 1464-residue chain is Secretory phospholipase A2 receptor (1464 aa).

The first 22 residues, 1 to 22 (MLLSPSLLLPLLLLLGAPRGCA), serve as a signal peptide directing secretion. Topologically, residues 23–1398 (EGVAAALTPE…ELPEKGPSHS (1376 aa)) are extracellular. One can recognise a Ricin B-type lectin domain in the interval 40-163 (KGIFVIQSES…GSGGGDICEY (124 aa)). 17 disulfides stabilise this stretch: C53–C66, C91–C108, C180–C206, C194–C221, C262–C356, C332–C348, C408–C503, C480–C495, C619–C636, C701–C798, C776–C790, C842–C939, C916–C931, C1069–C1089, C1211–C1225, C1282–C1378, and C1356–C1370. An N-linked (GlcNAc...) asparagine glycan is attached at N95. A Fibronectin type-II domain is found at 175-223 (AHGMPCMFPFQYNHQWHHECTREGREDDLLWCATTSRYERDEKWGFCPD). C-type lectin domains are found at residues 240–357 (NSHI…YVCK), 387–504 (YNRN…YVCK), 524–645 (HGGF…MSLC), 675–799 (GLAS…WICK), 821–940 (YQDA…SICK), 967–1098 (FNYK…GFVC), 1123–1234 (YGNR…GAIC), and 1259–1379 (FKSN…FICK). Residue N456 is glycosylated (N-linked (GlcNAc...) asparagine). Residues 1399–1419 (IIPLAVVLTLIVIVAICTLSF) traverse the membrane as a helical segment. Topologically, residues 1420–1464 (CIYKHNGGFFRRLAGFRNPYYPATNFSTVHLEENILISDLEKSDQ) are cytoplasmic. The Endocytosis signal signature appears at 1437 to 1443 (NPYYPAT).

Interacts with sPLA2-IB/PLA2G1B; this interaction mediates intracellular signaling as well as clearance of extracellular sPLA2-IB/PLA2G1B via endocytotic pathway. Interacts with sPLA2-X/PLA2G10; this interaction mediates sPLA2-X/PLA2G10 clearance and inactivation. The secretory phospholipase A2 receptor form may be produced by the action of metalloproteinases. It contains all extracellular domains and only lacks transmembrane and cytosolic regions. It is however unclear whether this form is produced by proteolytic cleavage as suggested by some experiments, or by alternative splicing.

The protein resides in the cell membrane. It is found in the secreted. In terms of biological role, receptor for secretory phospholipase A2 (sPLA2). Also able to bind to snake PA2-like toxins. Although its precise function remains unclear, binding of sPLA2 to its receptor participates in both positive and negative regulation of sPLA2 functions as well as clearance of sPLA2. Binding of sPLA2-IB/PLA2G1B induces various effects depending on the cell type, such as activation of the mitogen-activated protein kinase (MAPK) cascade to induce cell proliferation, the production of lipid mediators, selective release of arachidonic acid in bone marrow-derived mast cells. In neutrophils, binding of sPLA2-IB/PLA2G1B can activate p38 MAPK to stimulate elastase release and cell adhesion. May be involved in responses in pro-inflammatory cytokine productions during endotoxic shock. Also has endocytic properties and rapidly internalizes sPLA2 ligands, which is particularly important for the clearance of extracellular sPLA2s to protect their potent enzymatic activities. The soluble secretory phospholipase A2 receptor form is circulating and acts as a negative regulator of sPLA2 functions by blocking the biological functions of sPLA2-IB/PLA2G1B and sPLA2-X/PLA2G10. This Pongo abelii (Sumatran orangutan) protein is Secretory phospholipase A2 receptor (PLA2R1).